Here is a 281-residue protein sequence, read N- to C-terminus: Undecaprenyl-diphosphatase (281 aa).

7 helical membrane passes run 45–65 (AFTNMFNVVIQLGAILAVVVI), 86–106 (WQLWAKVILSALPAAVIGLIF), 114–134 (FQNFFSVALMLILYGIAFIYV), 148–168 (LVSLPYKTAFFIGLFQVLSLI), 196–216 (FFLGIPIMFGASLVKVLKFIV), 224–244 (SQLFILLVAMLVAFAVSLYVI), and 256–276 (FTFFGKYRIGLGILLLFYGLM).

Belongs to the UppP family.

It is found in the cell membrane. The enzyme catalyses di-trans,octa-cis-undecaprenyl diphosphate + H2O = di-trans,octa-cis-undecaprenyl phosphate + phosphate + H(+). Catalyzes the dephosphorylation of undecaprenyl diphosphate (UPP). Confers resistance to bacitracin. The polypeptide is Undecaprenyl-diphosphatase (Streptococcus mutans serotype c (strain ATCC 700610 / UA159)).